We begin with the raw amino-acid sequence, 599 residues long: UvrABC system protein C (599 aa).

Residues 19–95 (ESTGVYIFYD…IKKYRPIMNV (77 aa)) form the GIY-YIG domain. The UVR domain occupies 206–241 (EEIIEKLYDQMQEYSKNLEFEKAAKIRDKIRLLQNL).

The protein belongs to the UvrC family. In terms of assembly, interacts with UvrB in an incision complex.

The protein resides in the cytoplasm. In terms of biological role, the UvrABC repair system catalyzes the recognition and processing of DNA lesions. UvrC both incises the 5' and 3' sides of the lesion. The N-terminal half is responsible for the 3' incision and the C-terminal half is responsible for the 5' incision. This Dictyoglomus thermophilum (strain ATCC 35947 / DSM 3960 / H-6-12) protein is UvrABC system protein C.